Here is a 425-residue protein sequence, read N- to C-terminus: AP-3 complex subunit mu (425 aa).

In terms of domain architecture, MHD spans 175–423 (TNEFFIHVLE…TIIAQNVSFR (249 aa)).

The protein belongs to the adaptor complexes medium subunit family.

It is found in the cytoplasm. Its subcellular location is the cytoskeleton. It localises to the microtubule organizing center. The protein localises to the spindle pole body. The protein resides in the membrane. It is found in the golgi apparatus. Its subcellular location is the cytoplasmic vesicle membrane. Functionally, part of the AP-3 complex, an adaptor-related complex which is not clathrin-associated. The complex is associated with the Golgi region as well as more peripheral structures. It facilitates the budding of vesicles from the Golgi membrane and may be directly involved in trafficking to the vacuole. The sequence is that of AP-3 complex subunit mu (apm3) from Schizosaccharomyces pombe (strain 972 / ATCC 24843) (Fission yeast).